An 833-amino-acid chain; its full sequence is Transmembrane protease serine 7 (833 aa).

Residues 1–62 lie on the Cytoplasmic side of the membrane; it reads MDKEKSDPSC…RAPFWNVQNK (62 aa). The disordered stretch occupies residues 30 to 49; that stretch reads KLPGRRLPRKPIGKARPRKQ. A compositionally biased stretch (basic residues) spans 32-49; that stretch reads PGRRLPRKPIGKARPRKQ. A helical; Signal-anchor for type II membrane protein membrane pass occupies residues 63–83; sequence IILFTVFLFILAVTAWTLLWL. At 84 to 829 the chain is on the extracellular side; the sequence is YISKTDSKDA…NFVPWIHKYV (746 aa). Positions 92-220 constitute an SEA domain; it reads DAFYFVGMFR…DSVVLNAGLR (129 aa). Asparagine 196 carries an N-linked (GlcNAc...) asparagine glycan. 3 disulfides stabilise this stretch: cysteine 233/cysteine 259, cysteine 285/cysteine 312, and cysteine 355/cysteine 386. CUB domains lie at 233–350 and 355–471; these read CSQY…FEVI and CENT…YNIS. Residues asparagine 405 and asparagine 469 are each glycosylated (N-linked (GlcNAc...) asparagine). 2 LDL-receptor class A domains span residues 473–509 and 548–585; these read PCPA…LFCV and PCTN…EGCG. 7 disulfides stabilise this stretch: cysteine 474–cysteine 486, cysteine 481–cysteine 499, cysteine 493–cysteine 508, cysteine 549–cysteine 561, cysteine 556–cysteine 575, cysteine 569–cysteine 584, and cysteine 621–cysteine 637. Residues 596 to 830 enclose the Peptidase S1 domain; that stretch reads VVGGSDSQEG…FVPWIHKYVP (235 aa). Residues histidine 636 and aspartate 684 each act as charge relay system in the active site. Intrachain disulfides connect cysteine 720/cysteine 786, cysteine 752/cysteine 765, and cysteine 776/cysteine 806. The active-site Charge relay system is the serine 780.

It belongs to the peptidase S1 family. As to quaternary structure, forms a heterodimer with SERPINA5. In terms of processing, N-glycosylated.

It is found in the cell membrane. In terms of biological role, serine protease which preferentially hydrolyzes peptides with Arg at the P1 position. This Rattus norvegicus (Rat) protein is Transmembrane protease serine 7.